The following is a 333-amino-acid chain: Anthranilate phosphoribosyltransferase (333 aa).

5-phospho-alpha-D-ribose 1-diphosphate-binding positions include glycine 78, 81 to 82 (GD), threonine 86, 88 to 91 (NVST), 106 to 114 (KHGNYSVSS), and serine 118. Residue glycine 78 participates in anthranilate binding. Position 90 (serine 90) interacts with Mg(2+). Asparagine 109 contacts anthranilate. Anthranilate is bound at residue arginine 164. Residues aspartate 222 and glutamate 223 each contribute to the Mg(2+) site.

It belongs to the anthranilate phosphoribosyltransferase family. As to quaternary structure, homodimer. Requires Mg(2+) as cofactor.

It carries out the reaction N-(5-phospho-beta-D-ribosyl)anthranilate + diphosphate = 5-phospho-alpha-D-ribose 1-diphosphate + anthranilate. It participates in amino-acid biosynthesis; L-tryptophan biosynthesis; L-tryptophan from chorismate: step 2/5. Catalyzes the transfer of the phosphoribosyl group of 5-phosphorylribose-1-pyrophosphate (PRPP) to anthranilate to yield N-(5'-phosphoribosyl)-anthranilate (PRA). This Natronomonas pharaonis (strain ATCC 35678 / DSM 2160 / CIP 103997 / JCM 8858 / NBRC 14720 / NCIMB 2260 / Gabara) (Halobacterium pharaonis) protein is Anthranilate phosphoribosyltransferase.